Here is a 328-residue protein sequence, read N- to C-terminus: Mitotic checkpoint protein BUB3 (328 aa).

WD repeat units lie at residues 4–44 (SNEF…LYDV), 47–84 (NSMRLKYQHTGAVLDCAFYDPTHAWSGGLDHQLKMHDL), 87–125 (DQENLVGTHDAPIRCVEYCPEVNVMVTGSWDQTVKLWDP), 129–164 (CNAGTFSQPEKVYTLSVSGDRLIVGTAGRRVLVWDL), and 170–210 (VQQR…YLDP). K179 carries the post-translational modification N6-acetyllysine. S211 carries the phosphoserine modification. Residue K216 forms a Glycyl lysine isopeptide (Lys-Gly) (interchain with G-Cter in ubiquitin) linkage. WD repeat units follow at residues 217–263 (KKYA…IWDP) and 267–316 (KRLC…IRQV).

This sequence belongs to the WD repeat BUB3 family. Interacts with BUB1 and BUBR1. The BUB1/BUB3 complex interacts with MAD1L1. Interacts with ZNF207/BuGZ; leading to promote stability and kinetochore loading of BUB3. In terms of processing, poly-ADP-ribosylated by PARP1. Post-translationally, ubiquitinated by UBR5, promoting disassembly of the mitotic checkpoint complex from the APC/C complex.

The protein localises to the nucleus. Its subcellular location is the chromosome. It is found in the centromere. It localises to the kinetochore. Functionally, has a dual function in spindle-assembly checkpoint signaling and in promoting the establishment of correct kinetochore-microtubule (K-MT) attachments. Promotes the formation of stable end-on bipolar attachments. Necessary for kinetochore localization of BUB1. Regulates chromosome segregation during oocyte meiosis. The BUB1/BUB3 complex plays a role in the inhibition of anaphase-promoting complex or cyclosome (APC/C) when spindle-assembly checkpoint is activated and inhibits the ubiquitin ligase activity of APC/C by phosphorylating its activator CDC20. This complex can also phosphorylate MAD1L1. This Homo sapiens (Human) protein is Mitotic checkpoint protein BUB3 (BUB3).